Consider the following 226-residue polypeptide: Phosphoheptose isomerase (226 aa).

In terms of domain architecture, SIS spans 50-212 (IAGVFETGGK…ERMMGYGTEC (163 aa)). 65–67 (NGG) is a binding site for substrate. Zn(2+)-binding residues include His-74 and Glu-78. Substrate contacts are provided by residues Glu-78, 109 to 110 (ND), 135 to 137 (STS), Ser-140, and Gln-188. Zn(2+) contacts are provided by Gln-188 and His-196.

Belongs to the SIS family. GmhA subfamily. The cofactor is Zn(2+).

It localises to the cytoplasm. The enzyme catalyses 2 D-sedoheptulose 7-phosphate = D-glycero-alpha-D-manno-heptose 7-phosphate + D-glycero-beta-D-manno-heptose 7-phosphate. The protein operates within carbohydrate biosynthesis; D-glycero-D-manno-heptose 7-phosphate biosynthesis; D-glycero-alpha-D-manno-heptose 7-phosphate and D-glycero-beta-D-manno-heptose 7-phosphate from sedoheptulose 7-phosphate: step 1/1. Functionally, catalyzes the isomerization of sedoheptulose 7-phosphate in D-glycero-D-manno-heptose 7-phosphate. The chain is Phosphoheptose isomerase from Chlorobium phaeobacteroides (strain DSM 266 / SMG 266 / 2430).